The primary structure comprises 342 residues: Photosystem II D2 protein (342 aa).

The Cytoplasmic portion of the chain corresponds to 1–29 (ERGWFDILDDWLKRDRFVFVGWSGILLFP). Residues 30-50 (CAYLALGGWLTGTTFVTSWYT) form a helical membrane-spanning segment. Residues 51-113 (HGLASSYLEG…IALHGAFGLI (63 aa)) are Lumenal-facing. Residue histidine 107 participates in chlorophyll a binding. The chain crosses the membrane as a helical span at residues 114-130 (GFMLRQFEIARLVGVRP). Pheophytin a-binding residues include glutamine 119 and asparagine 132. Residues 131 to 141 (YNAIAFSAPIA) lie on the Cytoplasmic side of the membrane. The chain crosses the membrane as a helical span at residues 142–155 (VFVSVFLIYPLGQS). The Lumenal segment spans residues 156 to 196 (SWFFAPSFGVAAIFRFLLFFQGFHNWTLNPFHMMGVAGVLG). Histidine 187 serves as a coordination point for chlorophyll a. The helical transmembrane segment at 197–217 (GALLCAIHGATVENTLFQDGE) threads the bilayer. Residues histidine 204 and phenylalanine 251 each coordinate a plastoquinone. A Fe cation-binding site is contributed by histidine 204. Residues 218-267 (GASTFRAFNPTQAEETYSMVTANRFWSQIFGIAFSNKRWLHFFMLFVPVT) lie on the Cytoplasmic side of the membrane. Histidine 258 lines the Fe cation pocket. The chain crosses the membrane as a helical span at residues 268-284 (GLWMSAIGVVGLALNLR). The Lumenal segment spans residues 285 to 342 (SYDFISQEIRAAEDPEFETFYTKNLLLNEGIRAWMAPQDQPHENFVFPEEVLPRGNAL).

This sequence belongs to the reaction center PufL/M/PsbA/D family. In terms of assembly, PSII is composed of 1 copy each of membrane proteins PsbA, PsbB, PsbC, PsbD, PsbE, PsbF, PsbH, PsbI, PsbJ, PsbK, PsbL, PsbM, PsbT, PsbX, PsbY, PsbZ, Psb30/Ycf12, peripheral proteins PsbO, CyanoQ (PsbQ), PsbU, PsbV and a large number of cofactors. It forms dimeric complexes. The D1/D2 heterodimer binds P680, chlorophylls that are the primary electron donor of PSII, and subsequent electron acceptors. It shares a non-heme iron and each subunit binds pheophytin, quinone, additional chlorophylls, carotenoids and lipids. There is also a Cl(-1) ion associated with D1 and D2, which is required for oxygen evolution. The PSII complex binds additional chlorophylls, carotenoids and specific lipids. serves as cofactor.

Its subcellular location is the cellular thylakoid membrane. The catalysed reaction is 2 a plastoquinone + 4 hnu + 2 H2O = 2 a plastoquinol + O2. In terms of biological role, photosystem II (PSII) is a light-driven water:plastoquinone oxidoreductase that uses light energy to abstract electrons from H(2)O, generating O(2) and a proton gradient subsequently used for ATP formation. It consists of a core antenna complex that captures photons, and an electron transfer chain that converts photonic excitation into a charge separation. The D1/D2 (PsbA/PsbD) reaction center heterodimer binds P680, the primary electron donor of PSII as well as several subsequent electron acceptors. D2 is needed for assembly of a stable PSII complex. This chain is Photosystem II D2 protein, found in Thermostichus vulcanus (Synechococcus vulcanus).